The primary structure comprises 917 residues: Coiled-coil domain-containing protein 186 (917 aa).

Disordered stretches follow at residues 1–52 (MKIR…SGDE), 97–118 (SCAN…PGGD), and 701–769 (TQRR…SVAV). The span at 33–44 (TTEKTSELRDDS) shows a compositional bias: basic and acidic residues. Residues 220–736 (RYLQQELTVK…TENGNHDKDI (517 aa)) adopt a coiled-coil conformation. Positions 722–736 (RKLEQTENGNHDKDI) are enriched in basic and acidic residues. Over residues 737 to 748 (SSMGSRSSSSGS) the composition is skewed to low complexity. Ser-759 carries the post-translational modification Phosphoserine. 2 coiled-coil regions span residues 778 to 822 (AMLI…IQSY) and 874 to 913 (KLQA…LEQR).

Expressed in postnatal germ cells.

In Mus musculus (Mouse), this protein is Coiled-coil domain-containing protein 186 (Ccdc186).